Here is a 364-residue protein sequence, read N- to C-terminus: UDP-N-acetylglucosamine--N-acetylmuramyl-(pentapeptide) pyrophosphoryl-undecaprenol N-acetylglucosamine transferase (364 aa).

UDP-N-acetyl-alpha-D-glucosamine-binding positions include 16-18 (TGG), asparagine 128, arginine 166, serine 195, isoleucine 249, and glutamine 294.

This sequence belongs to the glycosyltransferase 28 family. MurG subfamily.

The protein localises to the cell inner membrane. It catalyses the reaction di-trans,octa-cis-undecaprenyl diphospho-N-acetyl-alpha-D-muramoyl-L-alanyl-D-glutamyl-meso-2,6-diaminopimeloyl-D-alanyl-D-alanine + UDP-N-acetyl-alpha-D-glucosamine = di-trans,octa-cis-undecaprenyl diphospho-[N-acetyl-alpha-D-glucosaminyl-(1-&gt;4)]-N-acetyl-alpha-D-muramoyl-L-alanyl-D-glutamyl-meso-2,6-diaminopimeloyl-D-alanyl-D-alanine + UDP + H(+). The protein operates within cell wall biogenesis; peptidoglycan biosynthesis. Cell wall formation. Catalyzes the transfer of a GlcNAc subunit on undecaprenyl-pyrophosphoryl-MurNAc-pentapeptide (lipid intermediate I) to form undecaprenyl-pyrophosphoryl-MurNAc-(pentapeptide)GlcNAc (lipid intermediate II). The polypeptide is UDP-N-acetylglucosamine--N-acetylmuramyl-(pentapeptide) pyrophosphoryl-undecaprenol N-acetylglucosamine transferase (Chromohalobacter salexigens (strain ATCC BAA-138 / DSM 3043 / CIP 106854 / NCIMB 13768 / 1H11)).